Consider the following 360-residue polypeptide: Alpha-2-macroglobulin receptor-associated protein (360 aa).

An N-terminal signal peptide occupies residues 1–28 (MAPRRERVSTLPRLQLLVLLLLPLMLVP). 2 positions are modified to phosphoserine: Ser-53 and Ser-138. Residues 184–302 (EKIQEYNVLL…KHNHYQKQLE (119 aa)) adopt a coiled-coil conformation. The segment at 240–356 (RLRKVSHQGY…DLSSRVSRAR (117 aa)) is LDL receptor binding. The N-linked (GlcNAc...) asparagine glycan is linked to Asn-271. A Prevents secretion from ER motif is present at residues 357 to 360 (HNEL).

It belongs to the alpha-2-MRAP family. In terms of assembly, interacts with the LRP1/alpha-2-macroglobulin receptor heavy and light chains; the interaction is transient and coincides with a reduction of ligand binding by the receptor. Interacts with LRP2/glycoprotein 330. Interacts with LRP1B; binding is followed by internalization and degradation. Interacts with LDLR. Interacts with SORL1. Interacts with LRP1; this interaction is followed by rapid internalization. Post-translationally, N-glycosylated. Highly expressed in PYS-2 parietal endoderm cells and in the kidney. The RNA level increased about 10-fold during differentiation of F9 embryonal carcinoma cells to parietal endoderm cells.

It localises to the rough endoplasmic reticulum lumen. The protein resides in the endoplasmic reticulum-Golgi intermediate compartment lumen. It is found in the golgi apparatus. The protein localises to the cis-Golgi network. Its subcellular location is the golgi apparatus lumen. It localises to the endosome lumen. The protein resides in the cell surface. Its function is as follows. Molecular chaperone for LDL receptor-related proteins that may regulate their ligand binding activity along the secretory pathway. This Mus musculus (Mouse) protein is Alpha-2-macroglobulin receptor-associated protein (Lrpap1).